The chain runs to 354 residues: Cellular communication network factor 6 (354 aa).

A signal peptide spans 1–23 (MQGLLFSTLLLAGLAQFCCRVQG). The IGFBP N-terminal domain maps to 44-117 (RKQFCHWPCK…RYETGVCAYL (74 aa)). Intrachain disulfides connect Cys-48–Cys-72, Cys-52–Cys-74, Cys-54–Cys-75, Cys-61–Cys-78, Cys-86–Cys-100, and Cys-92–Cys-114. N-linked (GlcNAc...) asparagine glycosylation is present at Asn-178. Positions 208-253 (KCLVQATKWTPCSRTCGMGISNRVTNENSNCEMRKEKRLCYIQPCD) constitute a TSP type-1 domain. Cystine bridges form between Cys-268–Cys-305, Cys-285–Cys-319, Cys-296–Cys-335, Cys-299–Cys-337, and Cys-304–Cys-341. The 75-residue stretch at 268-342 (CQPTFQLSKA…TSCVCQRNCR (75 aa)) folds into the CTCK domain. A glycan (N-linked (GlcNAc...) asparagine) is linked at Asn-308.

The protein belongs to the CCN family. In terms of tissue distribution, predominant expression in adult kidney and testis and fetal kidney. Weaker expression found in placenta, ovary, prostate and small intestine. Also expressed in skeletally-derived cells such as synoviocytes and articular cartilage chondrocytes.

The protein resides in the secreted. It localises to the mitochondrion. Plays a role in mitochondrial electron transport and mitochondrial respiration. Through its regulation of the mitochondrial function may play a role in normal postnatal skeletal growth and cartilage homeostasis. In Homo sapiens (Human), this protein is Cellular communication network factor 6.